The following is a 53-amino-acid chain: Metallocarboxypeptidase inhibitor (53 aa).

3 disulfides stabilise this stretch: Cys9/Cys23, Cys15/Cys51, and Cys27/Cys38. Zn(2+) is bound at residue Ala53.

In terms of assembly, monomer. Interacts (via C-terminus) with human CPA4.

In terms of biological role, metallocarboxypeptidase inhibitor. Has an inhibitory effect on bovine CPA1 and CPB2, human CPA1, CPA2, CPA4, CPB1 and CPB2, and porcine CPB1. Does not inhibit D.melanogaster svr (carboxypeptidase D). Shows no activity against serine proteases subtilisin or bovine trypsin, cysteine protease papain, and aspartyl protease porcine pepsin. This Nerita versicolor (Four-tooth nerite) protein is Metallocarboxypeptidase inhibitor.